Here is a 325-residue protein sequence, read N- to C-terminus: Replication factor C small subunit (325 aa).

52-59 (GPAGVGKT) is a binding site for ATP.

It belongs to the activator 1 small subunits family. RfcS subfamily. Heteromultimer composed of small subunits (RfcS) and large subunits (RfcL).

Part of the RFC clamp loader complex which loads the PCNA sliding clamp onto DNA. This chain is Replication factor C small subunit, found in Natronomonas pharaonis (strain ATCC 35678 / DSM 2160 / CIP 103997 / JCM 8858 / NBRC 14720 / NCIMB 2260 / Gabara) (Halobacterium pharaonis).